The chain runs to 513 residues: MTILPKKKPPPPPDPEANGERSGSGAPDSHSRSGARPRSSPPPRWAYPGNPSSAAERHTQQVSPPPGSATSGGAGPLGDGALGSCCCCNGAGAGGCCSGPGHSKRRRQVLSAGPGATGNCPDTDDGAGNNSEDEYETAAQTQHLDPDTAEQQELCFEKTLSDKKGFIIKQMKEDGACLFRAVADQVYGDQDMHEVVRKHCMDYLMKNADYFSNYVTEDFTTYINRKRKNNCHGNHIEMQAMAEMYNRPVEVYQYGTEPINTFHGIQKNEDEPIRVSYHRNIHYNSVVNPNKATIGVGLGLPSFKPGYAEQSLMKSAIRTSEESWIEQQMLEDKKRATDWEATNEAIEEQVARESYLQWLRDQEKQARQPRKASATCSSATAAACSGLEEWSGRSPRQRSTAGSPEHPDLHAELCMKPPSPGAPLILGKPPSPCAPGPSNQMSTGADRATSPLVSLYPALECRAIMQHMSPTAFGLKDWDNDEILASVLAASQQEYLDTMKKSTLRRESSPDHS.

2 disordered regions span residues 1–75 and 99–136; these read MTIL…GGAG and GPGHSKRRRQVLSAGPGATGNCPDTDDGAGNNSEDEYE. One can recognise an OTU domain in the interval 166 to 289; the sequence is FIIKQMKEDG…NIHYNSVVNP (124 aa). The cys-loop stretch occupies residues 171–177; it reads MKEDGAC. The active site involves D174. C177 serves as the catalytic Nucleophile. Positions 226 to 236 are variable-loop; that stretch reads KRKNNCHGNHI. Residues 277–282 form a his-loop region; that stretch reads YHRNIH. The active site involves H282. A disordered region spans residues 387 to 446; the sequence is LEEWSGRSPRQRSTAGSPEHPDLHAELCMKPPSPGAPLILGKPPSPCAPGPSNQMSTGAD.

Belongs to the peptidase C85 family.

It catalyses the reaction Thiol-dependent hydrolysis of ester, thioester, amide, peptide and isopeptide bonds formed by the C-terminal Gly of ubiquitin (a 76-residue protein attached to proteins as an intracellular targeting signal).. Its function is as follows. Deubiquitinating enzyme that may function as negative regulator of the innate immune system. Has peptidase activity towards 'Lys-48'- and 'Lys-63'-linked polyubiquitin chains. Can also cleave 'Lys-11'-linked ubiquitin chains (in vitro). The chain is OTU domain-containing protein 5-A (otud5-a) from Xenopus laevis (African clawed frog).